Consider the following 690-residue polypeptide: Protein arginine N-methyltransferase 7 (690 aa).

2 consecutive SAM-dependent MTase PRMT-type domains span residues 14–357 and 366–690; these read QNSW…YSLW and TKSV…QKKL.

The protein belongs to the class I-like SAM-binding methyltransferase superfamily. Protein arginine N-methyltransferase family. PRMT7 subfamily.

In terms of biological role, essential arginine methyltransferase that can both catalyze the formation of omega-N monomethylarginine (MMA) and symmetrical dimethylarginine (sDMA). Specifically mediates the symmetrical dimethylation of arginine residues in the small nuclear ribonucleoproteins SmD1 and SmD3. The chain is Protein arginine N-methyltransferase 7 (Art7) from Drosophila yakuba (Fruit fly).